The sequence spans 468 residues: Cysteine--tRNA ligase (468 aa).

Cys29 serves as a coordination point for Zn(2+). A 'HIGH' region motif is present at residues 31–41 (PTVYNYIHIGN). Zn(2+) is bound by residues Cys209, His234, and Glu238. Positions 266–270 (KMSKS) match the 'KMSKS' region motif. Residue Lys269 coordinates ATP. Phosphoserine is present on Ser270.

This sequence belongs to the class-I aminoacyl-tRNA synthetase family. As to quaternary structure, monomer. Zn(2+) serves as cofactor.

It is found in the cytoplasm. It catalyses the reaction tRNA(Cys) + L-cysteine + ATP = L-cysteinyl-tRNA(Cys) + AMP + diphosphate. The polypeptide is Cysteine--tRNA ligase (Oceanobacillus iheyensis (strain DSM 14371 / CIP 107618 / JCM 11309 / KCTC 3954 / HTE831)).